Here is a 214-residue protein sequence, read N- to C-terminus: Protein DEHYDRATION-INDUCED 19 homolog 5 (214 aa).

Serine 110 is subject to Phosphoserine. The disordered stretch occupies residues 148 to 185 (PKKSKLVQPDSSSEASMEDNSLIRDSTEKDWESPSPLS). A compositionally biased stretch (polar residues) spans 156–166 (PDSSSEASMED). The span at 168–179 (SLIRDSTEKDWE) shows a compositional bias: basic and acidic residues.

Belongs to the Di19 family. In terms of processing, phosphorylated in vitro by CPK3 or CPK11. Expressed in seedlings, roots, leaves, stems, flowers and siliques.

Its subcellular location is the nucleus. The sequence is that of Protein DEHYDRATION-INDUCED 19 homolog 5 (DI19-5) from Arabidopsis thaliana (Mouse-ear cress).